The following is a 393-amino-acid chain: MSMFGTATRDNATRVLLLGSGELGKEVAIECQRLGLEVIACDRYADAPAMQVAHRSHVFDMLDADALQQVIDLEKPHFVVPEIEAIATSKLVELEAQGLNVVPTANATRLTMNREGIRRLAAEELGLPTSAYQFADSYESFAAAVETIGLPCVCKPVMSSSGKGQSVIRTPEQIEAAWQYAQQGGRSGAGRVIVEGFVDFDYEITLLTVRAVDGVHFCAPIGHRQEDGDYRESWQPQVMSENAIKAAEYVAEQVVNALGGYGLFGVELFVKGDKVIFNEVSPRPHDTGMVTLISQELSEFALHVRAFTGLPIGQIVQYGPSASAAILGQGQSQNIQFNGLDDALSIPHTQVRLFGKPDIAGRRRLGVALSRGKTTQEATDRAIECAKAVKIHY.

Residues Glu22–Leu23 and Glu82 contribute to the N(1)-(5-phospho-beta-D-ribosyl)glycinamide site. ATP contacts are provided by residues Arg114, Lys155, Ser160–Gln165, Glu195–Val198, and Glu203. In terms of domain architecture, ATP-grasp spans Arg119–Thr308. The Mg(2+) site is built by Glu267 and Glu279. Residues Asp286, Lys356, and Arg363–Arg364 contribute to the N(1)-(5-phospho-beta-D-ribosyl)glycinamide site.

It belongs to the PurK/PurT family. In terms of assembly, homodimer.

It catalyses the reaction N(1)-(5-phospho-beta-D-ribosyl)glycinamide + formate + ATP = N(2)-formyl-N(1)-(5-phospho-beta-D-ribosyl)glycinamide + ADP + phosphate + H(+). Its pathway is purine metabolism; IMP biosynthesis via de novo pathway; N(2)-formyl-N(1)-(5-phospho-D-ribosyl)glycinamide from N(1)-(5-phospho-D-ribosyl)glycinamide (formate route): step 1/1. Functionally, involved in the de novo purine biosynthesis. Catalyzes the transfer of formate to 5-phospho-ribosyl-glycinamide (GAR), producing 5-phospho-ribosyl-N-formylglycinamide (FGAR). Formate is provided by PurU via hydrolysis of 10-formyl-tetrahydrofolate. This is Formate-dependent phosphoribosylglycinamide formyltransferase from Vibrio cholerae serotype O1 (strain M66-2).